The chain runs to 480 residues: Cysteine--tRNA ligase (480 aa).

Zn(2+) is bound at residue Cys-29. The short motif at 31–41 (PTVYSDPHLGH) is the 'HIGH' region element. The Zn(2+) site is built by Cys-220, His-245, and Glu-249. Residues 276-280 (KMAKS) carry the 'KMSKS' region motif. Lys-279 contributes to the ATP binding site.

This sequence belongs to the class-I aminoacyl-tRNA synthetase family. Monomer. Requires Zn(2+) as cofactor.

Its subcellular location is the cytoplasm. The catalysed reaction is tRNA(Cys) + L-cysteine + ATP = L-cysteinyl-tRNA(Cys) + AMP + diphosphate. The polypeptide is Cysteine--tRNA ligase (Thermus thermophilus (strain ATCC BAA-163 / DSM 7039 / HB27)).